The following is a 1375-amino-acid chain: Ubiquitin carboxyl-terminal hydrolase 47 (1375 aa).

K122 carries the N6-acetyllysine modification. In terms of domain architecture, USP spans 188 to 564 (VGLVNQAMTC…NAYMLIYRLK (377 aa)). The active-site Nucleophile is C197. The segment at 425 to 452 (DEKSPQTESCTDSGAENEGSCHSDQMSN) is disordered. A compositionally biased stretch (polar residues) spans 430 to 452 (QTESCTDSGAENEGSCHSDQMSN). H503 acts as the Proton acceptor in catalysis. Position 832 is a phosphoserine (S832). Disordered regions lie at residues 840-859 (TAYQ…CERV), 880-968 (LKSL…SHSS), and 983-1024 (NGLD…ESGK). A compositionally biased stretch (low complexity) spans 882–899 (SLSLQQQQDGDNGDSSKS). S910 is subject to Phosphoserine. The segment covering 912 to 928 (LNERDSSASVDNRELEQ) has biased composition (basic and acidic residues). Over residues 929–938 (HIQTSDPENF) the composition is skewed to polar residues. S933 is modified (phosphoserine). The span at 940–950 (SEERSDSDVNN) shows a compositional bias: basic and acidic residues. Low complexity predominate over residues 953 to 968 (STSSVDSDILSSSHSS). Residues 997–1006 (KANEGKKETW) are compositionally biased toward basic and acidic residues. The span at 1007–1020 (DTAEEDSGTDSEYD) shows a compositional bias: acidic residues. S1013 is modified (phosphoserine). T1015 is subject to Phosphothreonine. Phosphoserine is present on S1017.

It belongs to the peptidase C19 family. As to quaternary structure, interacts with BTRC and FBXW11. Interacts with POLB. In terms of tissue distribution, expressed in skeletal muscle, heart and testis.

Its subcellular location is the cytoplasm. The enzyme catalyses Thiol-dependent hydrolysis of ester, thioester, amide, peptide and isopeptide bonds formed by the C-terminal Gly of ubiquitin (a 76-residue protein attached to proteins as an intracellular targeting signal).. In terms of biological role, ubiquitin-specific protease that specifically deubiquitinates monoubiquitinated DNA polymerase beta (POLB), stabilizing POLB thereby playing a role in base-excision repair (BER). Acts as a regulator of cell growth and genome integrity. May also indirectly regulate CDC25A expression at a transcriptional level. This Homo sapiens (Human) protein is Ubiquitin carboxyl-terminal hydrolase 47 (USP47).